Consider the following 177-residue polypeptide: ATP synthase subunit delta (177 aa).

This sequence belongs to the ATPase delta chain family. F-type ATPases have 2 components, F(1) - the catalytic core - and F(0) - the membrane proton channel. F(1) has five subunits: alpha(3), beta(3), gamma(1), delta(1), epsilon(1). F(0) has three main subunits: a(1), b(2) and c(10-14). The alpha and beta chains form an alternating ring which encloses part of the gamma chain. F(1) is attached to F(0) by a central stalk formed by the gamma and epsilon chains, while a peripheral stalk is formed by the delta and b chains.

The protein resides in the cell inner membrane. Functionally, f(1)F(0) ATP synthase produces ATP from ADP in the presence of a proton or sodium gradient. F-type ATPases consist of two structural domains, F(1) containing the extramembraneous catalytic core and F(0) containing the membrane proton channel, linked together by a central stalk and a peripheral stalk. During catalysis, ATP synthesis in the catalytic domain of F(1) is coupled via a rotary mechanism of the central stalk subunits to proton translocation. In terms of biological role, this protein is part of the stalk that links CF(0) to CF(1). It either transmits conformational changes from CF(0) to CF(1) or is implicated in proton conduction. The sequence is that of ATP synthase subunit delta from Neisseria meningitidis serogroup A / serotype 4A (strain DSM 15465 / Z2491).